The primary structure comprises 388 residues: Sporulation-specific mitogen-activated protein kinase SMK1 (388 aa).

Residues 38–337 (YEIIQFLGKG…VEQAISHPFL (300 aa)) form the Protein kinase domain. ATP-binding positions include 44-52 (LGKGAYGTV) and Lys-69. The active-site Proton acceptor is the Asp-166. The TXY signature appears at 207–209 (TNY).

Belongs to the protein kinase superfamily. CMGC Ser/Thr protein kinase family. MAP kinase subfamily. In terms of assembly, interacts with GSC2. Requires Mg(2+) as cofactor. Post-translationally, dually phosphorylated on Thr-207 and Tyr-209, which activates the enzyme.

It carries out the reaction L-seryl-[protein] + ATP = O-phospho-L-seryl-[protein] + ADP + H(+). The enzyme catalyses L-threonyl-[protein] + ATP = O-phospho-L-threonyl-[protein] + ADP + H(+). Activated by tyrosine and threonine phosphorylation. In terms of biological role, required for spore wall assembly. Required for proper deposition of the two outer layers of the spore wall, the chitosan and dityrosine layers. Negatively regulates GSC2, an alternate catalytic subunit of the 1,3-beta-glucan synthase (GS). Participates in a developmentally regulated signal transduction pathway that coordinates cytodifferentiation events with the transcriptional program. The protein is Sporulation-specific mitogen-activated protein kinase SMK1 (SMK1) of Saccharomyces cerevisiae (strain ATCC 204508 / S288c) (Baker's yeast).